A 324-amino-acid polypeptide reads, in one-letter code: Protein SRC2 homolog (324 aa).

Residues 1–111 form the C2 domain; sequence MECRSLDLTI…LDQNKGDEEK (111 aa). Topologically, residues 1-279 are cytoplasmic; it reads MECRSLDLTI…KPQKPKKHGK (279 aa). Positions 141-281 are disordered; sequence GSSSGPHAPV…QKPKKHGKAG (141 aa). 2 stretches are compositionally biased toward low complexity: residues 166-175 and 246-269; these read YPPGHGAPSA and PYGY…QAHG. Basic residues predominate over residues 270 to 279; that stretch reads KPQKPKKHGK. A helical; Signal-anchor membrane pass occupies residues 280 to 300; it reads AGAGMGLGLGLGAGLLGGLLV. Residues 301-324 are Lumenal-facing; the sequence is GEAVSDIADMGDMGDMGDMGGFDF.

As to quaternary structure, interacts with RBOHF (via N-terminus).

Its subcellular location is the endoplasmic reticulum membrane. The protein localises to the protein storage vacuole membrane. It localises to the cell membrane. Functionally, may act as an activator of the calcium-dependent activation of RBOHF that mediates reactive oxygen species (ROS) production and may play a role in cold responses. The sequence is that of Protein SRC2 homolog from Arabidopsis thaliana (Mouse-ear cress).